Here is a 488-residue protein sequence, read N- to C-terminus: ATP synthase subunit beta (488 aa).

164 to 171 (GGAGVGKT) is a binding site for ATP.

This sequence belongs to the ATPase alpha/beta chains family. In terms of assembly, F-type ATPases have 2 components, CF(1) - the catalytic core - and CF(0) - the membrane proton channel. CF(1) has five subunits: alpha(3), beta(3), gamma(1), delta(1), epsilon(1). CF(0) has four main subunits: a(1), b(1), b'(1) and c(9-12).

The protein localises to the cellular thylakoid membrane. The catalysed reaction is ATP + H2O + 4 H(+)(in) = ADP + phosphate + 5 H(+)(out). Produces ATP from ADP in the presence of a proton gradient across the membrane. The catalytic sites are hosted primarily by the beta subunits. This chain is ATP synthase subunit beta, found in Prochlorococcus marinus (strain NATL2A).